The primary structure comprises 295 residues: MASFMRSLFSDHSRYVESFRRFLNNSTEHQCMQEFMDKKLPGIIARIGETKAEIKILSIGGGAGEIDLQILSKVQAQYPGICINNEVVEPNAEQIVKYKELVAKTSNMENIKFAWHKETSSEYQKRVVEEDEEPPKWDFIHMIQMLYYVKDIPATLKFFHGLLAANAKILIILVSGTSGWEKLWKKYGFRLPRDDLCQYVTSSDLAQILDDLGIKYECYDLLSTMDITDCFIDGNENGDLLWDFLTETCNFIKTAPLDLKEEIMKDLQEPEFSVKKEGKVLFNNNLSFIVVEANV.

Blocked amino end (Ala) is present on Ala-2. Glu-28 is a substrate binding site. Residues Gly-60, Glu-89, Gln-94, Ser-120, and Ile-143 each coordinate S-adenosyl-L-methionine. Substrate is bound at residue Asn-284.

This sequence belongs to the class I-like SAM-binding methyltransferase superfamily. HNMT family. In terms of assembly, monomer.

Its subcellular location is the cytoplasm. The catalysed reaction is histamine + S-adenosyl-L-methionine = N(tau)-methylhistamine + S-adenosyl-L-homocysteine + H(+). Functionally, inactivates histamine by N-methylation. Plays an important role in degrading histamine and in regulating the airway response to histamine. This Rattus norvegicus (Rat) protein is Histamine N-methyltransferase (Hnmt).